Reading from the N-terminus, the 88-residue chain is Cell division topological specificity factor (88 aa).

This sequence belongs to the MinE family.

Prevents the cell division inhibition by proteins MinC and MinD at internal division sites while permitting inhibition at polar sites. This ensures cell division at the proper site by restricting the formation of a division septum at the midpoint of the long axis of the cell. The chain is Cell division topological specificity factor from Aeromonas hydrophila subsp. hydrophila (strain ATCC 7966 / DSM 30187 / BCRC 13018 / CCUG 14551 / JCM 1027 / KCTC 2358 / NCIMB 9240 / NCTC 8049).